Consider the following 560-residue polypeptide: DNA ligase B (560 aa).

The N6-AMP-lysine intermediate role is filled by Lys124.

Belongs to the NAD-dependent DNA ligase family. LigB subfamily.

The catalysed reaction is NAD(+) + (deoxyribonucleotide)n-3'-hydroxyl + 5'-phospho-(deoxyribonucleotide)m = (deoxyribonucleotide)n+m + AMP + beta-nicotinamide D-nucleotide.. Catalyzes the formation of phosphodiester linkages between 5'-phosphoryl and 3'-hydroxyl groups in double-stranded DNA using NAD as a coenzyme and as the energy source for the reaction. This chain is DNA ligase B, found in Escherichia coli O157:H7.